Here is a 274-residue protein sequence, read N- to C-terminus: Leucine-rich repeat-containing protein 10 (274 aa).

LRR repeat units lie at residues 30-51 (LDRMVDLSGSQLRRFPLHVCSF), 52-74 (TELVKLYLSDNHLHSLPPDLAQL), 76-97 (NLQILALDFNNFKALPRVVCTL), 98-120 (KQLCILYLGNNKLCDLPDELSLL), 121-143 (QNLRTLWLESNCLTRLPDVVCEL), 145-166 (LLKTLHAGSNALRLLPGQLRRL), 167-189 (RELRTIWLSGNQLADFPSVLLRM), and 191-213 (FLEVIDVDRNSIRYFPSLAHLTN). Residues 236 to 274 (RVGRWAEETPEPDPRKARRYALAKEENQEPPPPLLPSSS) are disordered. The segment covering 239–250 (RWAEETPEPDPR) has biased composition (basic and acidic residues). Positions 264–274 (EPPPPLLPSSS) are enriched in pro residues.

In terms of tissue distribution, detected specifically in the heart.

The protein localises to the nucleus. Its function is as follows. May play important roles in cardiac development and/or cardiac function. This Mus musculus (Mouse) protein is Leucine-rich repeat-containing protein 10 (Lrrc10).